The following is a 198-amino-acid chain: Peroxynitrite isomerase (198 aa).

The short motif at 20-26 (GVWEGTG) is the GXWXGXG element. Residue histidine 189 participates in heme b binding.

This sequence belongs to the nitrobindin family. As to quaternary structure, homodimer. Heme b serves as cofactor.

It carries out the reaction peroxynitrite = nitrate. It participates in nitrogen metabolism. Functionally, heme-binding protein able to scavenge peroxynitrite and to protect free L-tyrosine against peroxynitrite-mediated nitration, by acting as a peroxynitrite isomerase that converts peroxynitrite to nitrate. Therefore, this protein likely plays a role in peroxynitrite sensing and in the detoxification of reactive nitrogen and oxygen species (RNS and ROS, respectively). Is able to bind nitric oxide (NO) in vitro, but may act as a sensor of peroxynitrite levels in vivo. This chain is Peroxynitrite isomerase, found in Leifsonia xyli subsp. xyli (strain CTCB07).